Here is a 198-residue protein sequence, read N- to C-terminus: GTP cyclohydrolase-2 (198 aa).

A GTP-binding site is contributed by 52-56; sequence RMHSE. Cys57, Cys68, and Cys70 together coordinate Zn(2+). GTP-binding positions include Gln73, 94-96, and Thr116; that span reads EGR. The active-site Proton acceptor is the Asp128. Arg130 serves as the catalytic Nucleophile. 2 residues coordinate GTP: Thr151 and Lys156.

It belongs to the GTP cyclohydrolase II family. The cofactor is Zn(2+).

The enzyme catalyses GTP + 4 H2O = 2,5-diamino-6-hydroxy-4-(5-phosphoribosylamino)-pyrimidine + formate + 2 phosphate + 3 H(+). It participates in cofactor biosynthesis; riboflavin biosynthesis; 5-amino-6-(D-ribitylamino)uracil from GTP: step 1/4. In terms of biological role, catalyzes the conversion of GTP to 2,5-diamino-6-ribosylamino-4(3H)-pyrimidinone 5'-phosphate (DARP), formate and pyrophosphate. This is GTP cyclohydrolase-2 from Vibrio cholerae serotype O1 (strain ATCC 39315 / El Tor Inaba N16961).